The primary structure comprises 281 residues: Pantothenate synthetase (281 aa).

30 to 37 (MGYLHEGH) is a binding site for ATP. Histidine 37 serves as the catalytic Proton donor. Glutamine 61 lines the (R)-pantoate pocket. A beta-alanine-binding site is contributed by glutamine 61. Residue 147–150 (GEKD) coordinates ATP. A (R)-pantoate-binding site is contributed by glutamine 153. ATP contacts are provided by residues isoleucine 176 and 184–187 (KSSR).

The protein belongs to the pantothenate synthetase family. As to quaternary structure, homodimer.

Its subcellular location is the cytoplasm. The enzyme catalyses (R)-pantoate + beta-alanine + ATP = (R)-pantothenate + AMP + diphosphate + H(+). Its pathway is cofactor biosynthesis; (R)-pantothenate biosynthesis; (R)-pantothenate from (R)-pantoate and beta-alanine: step 1/1. Functionally, catalyzes the condensation of pantoate with beta-alanine in an ATP-dependent reaction via a pantoyl-adenylate intermediate. In Clostridium botulinum (strain Loch Maree / Type A3), this protein is Pantothenate synthetase.